We begin with the raw amino-acid sequence, 213 residues long: Large ribosomal subunit protein eL14 (213 aa).

K79 carries the N6-acetyllysine modification. Position 85 is an N6-acetyllysine; alternate (K85). K85 carries the post-translational modification N6-succinyllysine; alternate. A Glycyl lysine isopeptide (Lys-Gly) (interchain with G-Cter in SUMO2) cross-link involves residue K124. S139 is modified (phosphoserine). Residues 166-213 form a disordered region; that stretch reads TAGKKAPAQKAPAQKAAGQKAAPPPKAQKVQKPPAQKAPAPKASGEKA. A 1-1; approximate repeat occupies 169-173; that stretch reads KKAPA. The tract at residues 169–188 is 4 X 5 AA tandem repeats of Q-K-A-[APS]-X; sequence KKAPAQKAPAQKAAGQKAAP. 5 tandem repeats follow at residues 174 to 178, 179 to 183, 184 to 188, 191 to 193, and 194 to 196. The 2 X 3 AA tandem repeats of K-G-Q stretch occupies residues 191–196; the sequence is KAQKVQ. Residue K202 is modified to N6-succinyllysine.

It belongs to the eukaryotic ribosomal protein eL14 family. As to quaternary structure, component of the large ribosomal subunit.

The protein localises to the cytoplasm. Its function is as follows. Component of the large ribosomal subunit. The ribosome is a large ribonucleoprotein complex responsible for the synthesis of proteins in the cell. The chain is Large ribosomal subunit protein eL14 (RPL14) from Sus scrofa (Pig).